Reading from the N-terminus, the 512-residue chain is DNA-binding protein (512 aa).

The disordered stretch occupies residues Met1–Glu105. Residues Leu9–Arg21 show a composition bias toward basic and acidic residues. The segment covering Gln69–Pro78 has biased composition (pro residues). Over residues Pro79 to His88 the composition is skewed to basic residues. Acidic residues predominate over residues Gln96–Glu105. At Tyr174 the chain carries Phosphotyrosine; by host. Zn(2+) is bound by residues Cys263 and His265. A flexible loop region spans residues Ile276–Leu310. Residues Cys318, Cys334, Cys376, Cys378, Cys430, and Cys447 each contribute to the Zn(2+) site. The C-terminal arm, DBP binding stretch occupies residues Val495–Phe512.

It belongs to the adenoviridae E2A DNA-binding protein family. Homomultimerizes on viral ssDNA bound to pTP. Forms a initiation complex with viral polymerase, pTP and hosts NFIA and POU2F1/OCT1. Interacts with host SRCAP.

The protein resides in the host nucleus. Plays a role in the elongation phase of viral strand displacement replication by unwinding the template in an ATP-independent fashion, employing its capacity to form multimers. Also enhances the rate of initiation. Released from template upon second strand synthesis. Assembles in complex with viral pTP, viral pol, host NFIA and host POU2F1/OCT1 on viral origin of replication. Covers the whole ssDNA genome during synthesis. The complementary strand synthesis induces its relese from DNA template. May inhibit cellular transcription mediated by the interaction between host SRCAP and CBP. The protein is DNA-binding protein of Homo sapiens (Human).